We begin with the raw amino-acid sequence, 401 residues long: Imidazolonepropionase (401 aa).

Fe(3+) is bound by residues H66 and H68. Residues H66 and H68 each contribute to the Zn(2+) site. Residues R75, Y138, and H171 each coordinate 4-imidazolone-5-propanoate. Y138 serves as a coordination point for N-formimidoyl-L-glutamate. Residue H236 participates in Fe(3+) binding. H236 is a binding site for Zn(2+). A 4-imidazolone-5-propanoate-binding site is contributed by Q239. D311 is a binding site for Fe(3+). D311 is a binding site for Zn(2+). Residues N313 and G315 each contribute to the N-formimidoyl-L-glutamate site. 4-imidazolone-5-propanoate is bound at residue T316.

It belongs to the metallo-dependent hydrolases superfamily. HutI family. Zn(2+) serves as cofactor. The cofactor is Fe(3+).

The protein resides in the cytoplasm. The enzyme catalyses 4-imidazolone-5-propanoate + H2O = N-formimidoyl-L-glutamate. It functions in the pathway amino-acid degradation; L-histidine degradation into L-glutamate; N-formimidoyl-L-glutamate from L-histidine: step 3/3. Its function is as follows. Catalyzes the hydrolytic cleavage of the carbon-nitrogen bond in imidazolone-5-propanoate to yield N-formimidoyl-L-glutamate. It is the third step in the universal histidine degradation pathway. This Pseudomonas putida (strain GB-1) protein is Imidazolonepropionase.